A 412-amino-acid chain; its full sequence is 5,5'-dehydrodivanillate O-demethylase ferredoxin reductase subunit (412 aa).

Residues A14, K49, V82, R130, D279, and V298 each coordinate FAD.

Belongs to the FAD-dependent oxidoreductase family. In terms of assembly, monomer. The three-component monooxygenase is composed of an oxygenase (LigXa), a ferredoxin (LigXc) and a ferredoxin reductase (LigXd). FAD serves as cofactor.

The catalysed reaction is 5,5'-dehydrodivanillate + NADH + O2 + H(+) = 2,2',3-trihydroxy-3'-methoxy-5,5'-dicarboxybiphenyl + formaldehyde + NAD(+) + H2O. In terms of biological role, involved in the catabolism of 5,5'-dehydrodivanillate (DDVA), an intermediate in the biodegradation of lignin. Part of a three-component monooxygenase that catalyzes the O-demethylation of DDVA, leading to the formation of 2,2',3-trihydroxy-3'-methoxy-5,5'-dicarboxybiphenyl (OH-DDVA). LigXd probably transfers the electrons from NADH to LigXc. This is 5,5'-dehydrodivanillate O-demethylase ferredoxin reductase subunit from Sphingobium sp. (strain NBRC 103272 / SYK-6).